The chain runs to 662 residues: DNA topoisomerase 4 subunit B (662 aa).

ATP contacts are provided by residues Tyr20, Asn60, Asp87, 129–135 (GLHGVGV), and Lys359. In terms of domain architecture, Toprim spans 439–553 (TELFIVEGDS…DGHLYLAKPP (115 aa)). Mg(2+) is bound by residues Glu445, Asp518, and Asp520.

The protein belongs to the type II topoisomerase family. ParE type 1 subfamily. Heterotetramer composed of ParC and ParE. The cofactor is Mg(2+). Requires Mn(2+) as cofactor. It depends on Ca(2+) as a cofactor.

The catalysed reaction is ATP-dependent breakage, passage and rejoining of double-stranded DNA.. Its function is as follows. Topoisomerase IV is essential for chromosome segregation. It relaxes supercoiled DNA. Performs the decatenation events required during the replication of a circular DNA molecule. This Rickettsia bellii (strain RML369-C) protein is DNA topoisomerase 4 subunit B.